A 365-amino-acid chain; its full sequence is MYPPGCAKVKCSWHHCLPGLLLQLLLALCFFSYLRMSQEKPKPKPMWVSELGAPSQATEGSSAHLPLRVLLWTWPFNQPVALSRCSELWPGTADCQLTVNRSEYPQADAVLVHHREVSHRPQMQLPPSPRPPGQRWVWFSMESPSNCLKLKDLDGYFNLTMSYRRDSDIFMPYGWLEPWPSQPVETLLNISAKTKLVAWVVSNWNTDSIRVQYYKLLKPHLQVDVYGRFHTPLPHALMAKQLSQYKFYLAFENSLHPDYITEKLWKNALQAWAVPVVLGPSRVNYEQFLPPKAFIHVEDFQSPKDLAQYLLALDKDYASYLNYFRWRETLRPRSFSWALMFCKACWKLQQEPRYQTVPSIASWFQ.

Topologically, residues 1–15 (MYPPGCAKVKCSWHH) are cytoplasmic. Residues 16 to 34 (CLPGLLLQLLLALCFFSYL) form a helical; Signal-anchor for type II membrane protein membrane-spanning segment. The Lumenal segment spans residues 35–365 (RMSQEKPKPK…TVPSIASWFQ (331 aa)). Residues N100, N158, and N189 are each glycosylated (N-linked (GlcNAc...) asparagine).

It belongs to the glycosyltransferase 10 family. Glycosylated. Liver, kidney, lung and brain.

It localises to the golgi apparatus. The protein localises to the golgi stack membrane. The enzyme catalyses a beta-D-galactosyl-(1-&gt;3)-N-acetyl-beta-D-glucosaminyl derivative + GDP-beta-L-fucose = a beta-D-galactosyl-(1-&gt;3)-[alpha-L-fucosyl-(1-&gt;4)]-N-acetyl-beta-D-glucosaminyl derivative + GDP + H(+). It catalyses the reaction an N-acetyl-alpha-neuraminyl-(2-&gt;3)-beta-D-galactosyl-(1-&gt;4)-N-acetyl-beta-D-glucosaminyl derivative + GDP-beta-L-fucose = an alpha-Neu5Ac-(2-&gt;3)-beta-D-Gal-(1-&gt;4)-[alpha-L-Fuc-(1-&gt;3)]-beta-D-GlcNAc derivative + GDP + H(+). It carries out the reaction a beta-D-galactosyl-(1-&gt;4)-N-acetyl-beta-D-glucosaminyl derivative + GDP-beta-L-fucose = a beta-D-galactosyl-(1-&gt;4)-[alpha-L-fucosyl-(1-&gt;3)]-N-acetyl-beta-D-glucosaminyl derivative + GDP + H(+). The catalysed reaction is an alpha-Neu5Ac-(2-&gt;3)-beta-D-Gal-(1-&gt;4)-beta-D-GlcNAc-(1-&gt;3)-beta-D-Gal-(1-&gt;4)-[alpha-L-Fuc-(1-&gt;3)]-beta-D-GlcNAc derivative + GDP-beta-L-fucose = an alpha-Neu5Ac-(2-&gt;3)-beta-D-Gal-(1-&gt;4)-[alpha-L-Fuc-(1-&gt;3)]-beta-D-GlcNAc-(1-&gt;3)-beta-D-Gal-(1-&gt;4)-[alpha-L-Fuc-(1-&gt;3)]-beta-D-GlcNAc derivative + GDP + H(+). The enzyme catalyses Lc4Cer + GDP-beta-L-fucose = a lactoside III(4)-a-Fuc-Lc4Cer + GDP + H(+). It catalyses the reaction a beta-D-Gal-(1-&gt;3)-beta-D-GlcNAc-(1-&gt;3)-beta-D-Gal-(1-&gt;4)-beta-D-Glc-(1&lt;-&gt;1')-Cer(d18:1(4E)) + GDP-beta-L-fucose = a III(4)-a-Fuc-Lc4Cer(d18:1(4E)) + GDP + H(+). It carries out the reaction N-acetyl-alpha-neuraminosyl-(2-&gt;3)-beta-D-galactosyl-(1-&gt;3)-[N-acetyl-alpha-neuraminosyl-(2-&gt;6)]-N-acetyl-beta-D-glucosaminyl-(1-&gt;3)-beta-D-galactosyl-(1-&gt;4)-beta-D-glucosyl-(1&lt;-&gt;1')-N-acyl-sphing-4-enine + GDP-beta-L-fucose = N-acetyl-alpha-neuraminosyl-(2-&gt;3)-beta-D-galactosyl-(1-&gt;3)-alpha-L-fucosyl-(1-&gt;4)-[N-acetyl-alpha-neuraminosyl-(2-&gt;6)-N-acetyl-beta-D-glucosaminyl-(1-&gt;3)]-beta-D-galactosyl-(1-&gt;4)-beta-D-glucosyl-(1&lt;-&gt;1')-N-acyl-sphing-4-enine + GDP + H(+). The catalysed reaction is N-acetyl-alpha-neuraminosyl-(2-&gt;3)-beta-D-galactosyl-(1-&gt;3)-N-acetyl-beta-D-glucosaminyl-(1-&gt;3)-beta-D-galactosyl-(1-&gt;4)-beta-D-glucosyl-(1&lt;-&gt;1')-N-acyl-sphing-4-enine + GDP-beta-L-fucose = N-acetyl-alpha-neuraminosyl-(2-&gt;3)-beta-D-galactosyl-(1-&gt;3)-alpha-L-fucosyl-(1-&gt;4)-[N-acetyl-beta-D-glucosaminyl-(1-&gt;3)]-beta-D-galactosyl-(1-&gt;4)-beta-D-glucosyl-(1&lt;-&gt;1')-N-acyl-sphing-4-enine + GDP + H(+). The enzyme catalyses beta-D-galactosyl-(1-&gt;3)-N-acetyl-D-glucosamine + GDP-beta-L-fucose = beta-D-galactosyl-(1-&gt;3)-[alpha-L-fucosyl-(1-&gt;4)]-N-acetyl-D-glucosamine + GDP + H(+). It catalyses the reaction alpha-L-Fuc-(1-&gt;2)-beta-D-Gal-(1-&gt;3)-D-GlcNAc + GDP-beta-L-fucose = alpha-L-Fuc-(1-&gt;2)-beta-D-Gal-(1-&gt;3)-[alpha-L-Fuc-(1-&gt;4)]-D-GlcNAc + GDP + H(+). It carries out the reaction alpha-L-Fuc-(1-&gt;2)-beta-D-Gal-(1-&gt;4)-D-GlcNAc + GDP-beta-L-fucose = alpha-L-Fuc-(1-&gt;2)-beta-D-Gal-(1-&gt;4)-[alpha-L-Fuc-(1-&gt;3)]-D-GlcNAc + GDP + H(+). The catalysed reaction is beta-D-galactosyl-(1-&gt;4)-N-acetyl-D-glucosamine + GDP-beta-L-fucose = beta-D-galactosyl-(1-&gt;4)-[alpha-L-fucosyl-(1-&gt;3)]-N-acetyl-D-glucosamine + GDP + H(+). The enzyme catalyses lactose + GDP-beta-L-fucose = beta-D-galactosyl-(1-&gt;4)-[alpha-L-fucosyl-(1-&gt;3)]-D-glucose + GDP + H(+). It catalyses the reaction an alpha-Neu5Ac-(2-&gt;3)-beta-D-Gal-(1-&gt;3)-D-GlcNAc derivative + GDP-beta-L-fucose = an alpha-Neu5Ac-(2-&gt;3)-beta-D-Gal-(1-&gt;3)-[alpha-L-Fuc-(1-&gt;4)]-beta-D-GlcNAc derivative + GDP + H(+). It functions in the pathway protein modification; protein glycosylation. Catalyzes the transfer of L-fucose, from a guanosine diphosphate-beta-L-fucose, to both the subterminal N-acetyl glucosamine (GlcNAc) of type 1 chain (beta-D-Gal-(1-&gt;3)-beta-D-GlcNAc) glycolipids and oligosaccharides via an alpha(1,4) linkage, and the subterminal glucose (Glc) or GlcNAc of type 2 chain (beta-D-Gal-(1-&gt;4)-beta-D-GlcNAc) oligosaccharides via an alpha(1,3) linkage, independently of the presence of terminal alpha-L-fucosyl-(1,2) moieties on the terminal galactose of these acceptors and participates in the blood groups Lewis determination and expression of Lewis a (Le(a)), lewis b (Le(b)), Lewis x/SSEA-1 (Le(x)) and lewis y (Le(y)) antigens. Also catalyzes the transfer of L-fucose to subterminal GlcNAc of sialyl- and disialyl-lactotetraosylceramide to produce sialyl Lewis a (sLe(a)) and disialyl Lewis a via an alpha(1,4) linkage and therefore may regulate cell surface sialyl Lewis a expression and consequently regulates adhesive properties to E-selectin, cell proliferation and migration. Catalyzes the transfer of an L-fucose to 3'-sialyl-N-acetyllactosamine by an alpha(1,3) linkage, which allows the formation of sialyl-Lewis x structure and therefore may regulate the sialyl-Lewis x surface antigen expression and consequently adhesive properties to E-selectin. Prefers type 1 chain over type 2 acceptors. Type 1 tetrasaccharide is a better acceptor than type 1 disaccharide suggesting that a beta anomeric configuration of GlcNAc in the substrate is preferred. Lewis-positive (Le(+)) individuals have an active enzyme while Lewis-negative (Le(-)) individuals have an inactive enzyme. In Bos taurus (Bovine), this protein is 3-galactosyl-N-acetylglucosaminide 4-alpha-L-fucosyltransferase FUT3.